Reading from the N-terminus, the 48-residue chain is uncharacterized protein (48 aa).

This is an uncharacterized protein from Saccharomyces cerevisiae (strain ATCC 204508 / S288c) (Baker's yeast).